The primary structure comprises 875 residues: Valine--tRNA ligase (875 aa).

The 'HIGH' region motif lies at 45 to 55; it reads PNVTGVLHMGH. Residues 524-528 carry the 'KMSKS' region motif; the sequence is KMSKS. Lys527 serves as a coordination point for ATP. A coiled-coil region spans residues 803–837; it reads VKSLIDKTKELIRLEKQLEKYKMLNISVSKKLENE.

The protein belongs to the class-I aminoacyl-tRNA synthetase family. ValS type 1 subfamily. Monomer.

The protein resides in the cytoplasm. The enzyme catalyses tRNA(Val) + L-valine + ATP = L-valyl-tRNA(Val) + AMP + diphosphate. In terms of biological role, catalyzes the attachment of valine to tRNA(Val). As ValRS can inadvertently accommodate and process structurally similar amino acids such as threonine, to avoid such errors, it has a 'posttransfer' editing activity that hydrolyzes mischarged Thr-tRNA(Val) in a tRNA-dependent manner. The chain is Valine--tRNA ligase from Borreliella burgdorferi (strain ATCC 35210 / DSM 4680 / CIP 102532 / B31) (Borrelia burgdorferi).